A 72-amino-acid polypeptide reads, in one-letter code: UPF0270 protein Ent638_3781 (72 aa).

This sequence belongs to the UPF0270 family.

The protein is UPF0270 protein Ent638_3781 of Enterobacter sp. (strain 638).